The sequence spans 733 residues: Sulfate transporter (733 aa).

Over residues 1-18 (MSLKNEEQNDLSPKDSVK) the composition is skewed to basic and acidic residues. Residues 1 to 37 (MSLKNEEQNDLSPKDSVKGNDQYRAPSGIHLEREEES) form a disordered region. Residues serine 12 and serine 16 each carry the phosphoserine modification. 2 helical membrane passes run 113–133 (VMSG…YSLL) and 138–158 (PIYG…LGTS). A glycan (N-linked (GlcNAc...) asparagine) is linked at asparagine 194. 6 helical membrane passes run 214-234 (IIVG…MGFF), 237-257 (GFVS…GASF), 379-399 (IDAI…SEMF), 415-435 (AIGF…SAAL), 453-473 (VMTA…FFSL), and 519-539 (LIST…CVIL). In terms of domain architecture, STAS spans 563–714 (AYKNLQAKSG…SVYEAMTFAE (152 aa)).

The protein belongs to the SLC26A/SulP transporter (TC 2.A.53) family. Post-translationally, N-glycosylated.

The protein localises to the cell membrane. It is found in the apical cell membrane. The enzyme catalyses oxalate(in) + sulfate(out) = oxalate(out) + sulfate(in). The catalysed reaction is sulfate(out) + 2 chloride(in) = sulfate(in) + 2 chloride(out). It carries out the reaction oxalate(out) + 2 chloride(in) = oxalate(in) + 2 chloride(out). It catalyses the reaction bromide(in) + chloride(out) = bromide(out) + chloride(in). The enzyme catalyses nitrate(in) + chloride(out) = nitrate(out) + chloride(in). The catalysed reaction is iodide(in) + chloride(out) = iodide(out) + chloride(in). In terms of biological role, sulfate transporter which mediates sulfate uptake into chondrocytes in order to maintain adequate sulfation of proteoglycans which is needed for cartilage development. Mediates electroneutral anion exchange of sulfate ions for oxalate ions, sulfate and oxalate ions for chloride and/or hydroxyl ions and chloride ions for bromide, iodide and nitrate ions. The coupling of sulfate transport to both hydroxyl and chloride ions likely serves to ensure transport at both acidic pH when most sulfate uptake is mediated by sulfate-hydroxide exchange and alkaline pH when most sulfate uptake is mediated by sulfate-chloride exchange. Essential for chondrocyte proliferation, differentiation and cell size expansion. The sequence is that of Sulfate transporter (SLC26A2) from Bubalus bubalis (Domestic water buffalo).